A 773-amino-acid polypeptide reads, in one-letter code: Glucan endo-1,3-beta-D-glucosidase (773 aa).

Residues 1-194 form a beta-sandwich subdomain region; that stretch reads MPPGAKVPQA…KNYFSIAVLP (194 aa). One can recognise a GH81 domain in the interval 1–647; sequence MPPGAKVPQA…HWICNLDSLG (647 aa). 5 residues coordinate Mg(2+): Ile31, Asn34, Gln35, Tyr36, and Ala89. An alpha/beta subdomain region spans residues 195-288; that stretch reads DNTVSTLTYY…QGTSFKTVYR (94 aa). The interval 298–647 is (alpha/beta)6 barrel subdomain; the sequence is DKGTYDREAL…HWICNLDSLG (350 aa). 2 residues coordinate (1,3-beta-D-glucosyl)n: Tyr327 and Lys331. 4 residues coordinate Ca(2+): Asp365, Thr368, Glu373, and Lys376. The (1,3-beta-D-glucosyl)n site is built by Asp402 and His406. The active site involves Asp402. The Ca(2+) site is built by Leu454, Arg455, and Phe457. Residues Asn477, Glu479, and Glu483 each contribute to the (1,3-beta-D-glucosyl)n site. Active-site residues include Glu479 and Glu483. Lys527, Lys618, Asn619, and Trp621 together coordinate Mg(2+). Ca(2+) is bound by residues Asp712, Asn714, Asp716, Gly717, Lys718, Asp723, Asp748, Ile749, Asn750, Asp752, Lys754, and Asp759.

The protein belongs to the glycosyl hydrolase 81 family. Ca(2+) is required as a cofactor. It depends on Mg(2+) as a cofactor.

The protein resides in the secreted. The enzyme catalyses Hydrolysis of (1-&gt;3)-beta-D-glucosidic linkages in (1-&gt;3)-beta-D-glucans.. With respect to regulation, inhibited by manganese, zinc, and copper ions. In terms of biological role, cleaves internal linkages in 1,3-beta-glucan. May contribute to plant biomass degradation. In Acetivibrio thermocellus (strain ATCC 27405 / DSM 1237 / JCM 9322 / NBRC 103400 / NCIMB 10682 / NRRL B-4536 / VPI 7372) (Clostridium thermocellum), this protein is Glucan endo-1,3-beta-D-glucosidase.